The following is a 172-amino-acid chain: Disulfide bond formation protein B (172 aa).

Over 1-11 (MNPFRWSFRAQ) the chain is Cytoplasmic. The chain crosses the membrane as a helical span at residues 12 to 28 (FLLGFLACAGLLAYAIY). The Periplasmic segment spans residues 29–46 (VQLHLGLEPCPLCIFQRI). Residues Cys-38 and Cys-41 are joined by a disulfide bond. The helical transmembrane segment at 47 to 63 (AFAALAMFFLLGALHGP) threads the bilayer. At 64–70 (RAAAGRK) the chain is on the cytoplasmic side. The chain crosses the membrane as a helical span at residues 71–88 (VYGVLSFIAAGVGMGIAA). The Periplasmic segment spans residues 89 to 145 (RHVWVQIRPKDMMSSCGPPLSFLSETMGPFEVFRTVLTGTGDCGNIDWRFLGLSMPM). Residues Cys-104 and Cys-131 are joined by a disulfide bond. The helical transmembrane segment at 146–164 (WSMVWFVGLALWALYAGFK) threads the bilayer. Topologically, residues 165-172 (ARRSSVHH) are cytoplasmic.

This sequence belongs to the DsbB family.

The protein resides in the cell inner membrane. Its function is as follows. Required for disulfide bond formation in some periplasmic proteins. Acts by oxidizing the DsbA protein. The protein is Disulfide bond formation protein B of Xanthomonas euvesicatoria pv. vesicatoria (strain 85-10) (Xanthomonas campestris pv. vesicatoria).